We begin with the raw amino-acid sequence, 568 residues long: Glucose-6-phosphate isomerase, cytosolic 1 (568 aa).

The Proton donor role is filled by E360. Active-site residues include H391 and K516.

The protein belongs to the GPI family. In terms of assembly, homodimer.

The protein resides in the cytoplasm. It carries out the reaction alpha-D-glucose 6-phosphate = beta-D-fructose 6-phosphate. Its pathway is carbohydrate degradation; glycolysis; D-glyceraldehyde 3-phosphate and glycerone phosphate from D-glucose: step 2/4. This is Glucose-6-phosphate isomerase, cytosolic 1 (PGIC1) from Clarkia mildrediae.